A 445-amino-acid polypeptide reads, in one-letter code: Ribosomal protein uS12 methylthiotransferase RimO (445 aa).

Residues 4–119 enclose the MTTase N-terminal domain; it reads YKVGMVSLGC…INEAIMNFIN (116 aa). Residues C13, C48, C82, C157, C161, and C164 each coordinate [4Fe-4S] cluster. The region spanning 143 to 373 is the Radical SAM core domain; the sequence is TTDKATAYLR…MLLQKELSEE (231 aa). Positions 376–441 constitute a TRAM domain; sequence KNKLGREYDV…EYDLVGVVCN (66 aa).

Belongs to the methylthiotransferase family. RimO subfamily. It depends on [4Fe-4S] cluster as a cofactor.

It is found in the cytoplasm. The catalysed reaction is L-aspartate(89)-[ribosomal protein uS12]-hydrogen + (sulfur carrier)-SH + AH2 + 2 S-adenosyl-L-methionine = 3-methylsulfanyl-L-aspartate(89)-[ribosomal protein uS12]-hydrogen + (sulfur carrier)-H + 5'-deoxyadenosine + L-methionine + A + S-adenosyl-L-homocysteine + 2 H(+). Functionally, catalyzes the methylthiolation of an aspartic acid residue of ribosomal protein uS12. The polypeptide is Ribosomal protein uS12 methylthiotransferase RimO (Clostridium perfringens (strain SM101 / Type A)).